Reading from the N-terminus, the 473-residue chain is Knob-associated histidine-rich protein (473 aa).

The N-terminal stretch at 1–34 is a signal peptide; it reads MKSFKNKNTLRRKKAFPVFTKILLVSFLVWVLKC. A glycan (N-linked (GlcNAc...) asparagine) is linked at N42. Over residues 57 to 87 the composition is skewed to basic residues; the sequence is AQKQHEHHHHHHHQHQHQHQAPHQAHHHHHH. 2 disordered regions span residues 57–143 and 347–473; these read AQKQ…QVFR and SSVN…DGSK. Positions 95–104 are enriched in low complexity; the sequence is PQVHQQVHGQ. The segment covering 108–117 has biased composition (basic residues); that stretch reads HHHHHHHHHQ. Basic and acidic residues-rich tracts occupy residues 354–375 and 396–405; these read KHGD…EGEK and KDNEDAESVK. Residues 406–422 are compositionally biased toward basic residues; sequence SKKHKSHDCEKKKSKKH. Composition is skewed to basic and acidic residues over residues 423 to 444 and 453 to 473; these read KDNE…GEKH and KTNE…DGSK.

It is found in the secreted. KAHRP might mimick human histidine-rich glycoproteins to anchor host thrombospondin or a parasite analog in a binding complex with the endothelial cell receptor. This Plasmodium falciparum protein is Knob-associated histidine-rich protein.